The primary structure comprises 226 residues: MNIILKISGKFFDEDNVNNLIVLRESIRELTYNGFRVGIVTGGGSTARRYIKLAREIGIGEAYLDLLGIWASRLNAYLVMFSLQDLAYMHVPQSLEEFIQDWSHGKVVVTGGFQPGQSTAAVAALVAEASSSKTLVVATNVDGVYEKDPRVYTDVKLIPHLTTQDLRKILEGSQSVQAGTYELLDPLAIKIVERSKIRVVVMNYRKLNRIINILKGEEVSSIIEPT.

Residue 6–10 (KISGK) participates in ATP binding. Glycine 43 lines the UMP pocket. The ATP site is built by glycine 44 and arginine 48. UMP is bound by residues aspartate 65 and 113-119 (FQPGQST). ATP-binding residues include threonine 139, asparagine 140, tyrosine 145, and aspartate 148.

The protein belongs to the UMP kinase family. Homohexamer.

It is found in the cytoplasm. It catalyses the reaction UMP + ATP = UDP + ADP. It participates in pyrimidine metabolism; CTP biosynthesis via de novo pathway; UDP from UMP (UMPK route): step 1/1. With respect to regulation, inhibited by UTP. Functionally, catalyzes the reversible phosphorylation of UMP to UDP. This chain is Uridylate kinase, found in Saccharolobus islandicus (strain M.16.27) (Sulfolobus islandicus).